A 265-amino-acid chain; its full sequence is tRNA (guanine-N(7)-)-methyltransferase (265 aa).

Over residues 1-16 (MNHDDPNASGVPHDDA) the composition is skewed to basic and acidic residues. The interval 1–40 (MNHDDPNASGVPHDDANDAAPASASDAARATGHADDESSP) is disordered. Low complexity predominate over residues 18 to 31 (DAAPASASDAARAT). 4 residues coordinate S-adenosyl-L-methionine: glutamate 95, glutamate 120, aspartate 147, and aspartate 170. Aspartate 170 is an active-site residue. Substrate-binding positions include lysine 174, aspartate 206, and 241–244 (TKFE).

The protein belongs to the class I-like SAM-binding methyltransferase superfamily. TrmB family.

It catalyses the reaction guanosine(46) in tRNA + S-adenosyl-L-methionine = N(7)-methylguanosine(46) in tRNA + S-adenosyl-L-homocysteine. Its pathway is tRNA modification; N(7)-methylguanine-tRNA biosynthesis. Functionally, catalyzes the formation of N(7)-methylguanine at position 46 (m7G46) in tRNA. The polypeptide is tRNA (guanine-N(7)-)-methyltransferase (Burkholderia thailandensis (strain ATCC 700388 / DSM 13276 / CCUG 48851 / CIP 106301 / E264)).